Here is a 590-residue protein sequence, read N- to C-terminus: Nuclear receptor subfamily 2 group C member 1 (590 aa).

Residues 1-166 (MATIEEIAHQ…RLQRCIAFGM (166 aa)) are required for interaction with KAT2B. Positions 98–173 (FDLCVVCGDK…FGMKQDSVQC (76 aa)) form a DNA-binding region, nuclear receptor. 2 consecutive NR C4-type zinc fingers follow at residues 101–121 (CVVC…CEGC) and 137–156 (CRGS…CQYC). A phosphoserine mark is found at Ser185 and Ser203. Thr208 is subject to Phosphothreonine. Thr210 is subject to Phosphothreonine; by MAPK1. Lys238 participates in a covalent cross-link: Glycyl lysine isopeptide (Lys-Gly) (interchain with G-Cter in SUMO); alternate. A Glycyl lysine isopeptide (Lys-Gly) (interchain with G-Cter in SUMO2); alternate cross-link involves residue Lys238. An NR LBD domain is found at 333 to 577 (ESMEGSTHLI…SVIPHILKME (245 aa)). Ser568 is modified (phosphoserine; by PKC). The tract at residues 571 to 590 (PHILKMEPADYNSQIIGHSL) is required for interaction with NRIP1. A Glycyl lysine isopeptide (Lys-Gly) (interchain with G-Cter in SUMO2) cross-link involves residue Lys575.

It belongs to the nuclear hormone receptor family. NR2 subfamily. As to quaternary structure, homodimer. Heterodimer; with NR2C2 which is required for chromatin remodeling and for binding to promoter regions such as globin DR1 repeats. Interacts with ESR1; the interaction prevents homodimerization of ESR1 and suppresses its transcriptional activity and cell growth. Interacts with NRIP1 (via its LXXLL motifs); the interaction provides corepressor activity. Interacts with HDAC3 (via the DNA-binding domain); the interaction recruits phosphorylated NR2C1 to PML bodies for sumoylation. Interacts with HDAC4 (via the DNA-binding domain). Interacts with PIAS1; the interaction is required for sumoylation of NR2C1. Interacts with UBE2I; the interaction is required for sumoylation of NR2C1. Interacts with KAT2B; the interaction acts as a corepressor of gene expression. Post-translationally, sumoylation requires both PIAS1 and UBE2I. Sumoylation appears to dissociate NR2C1 from the PML nuclear bodies. Enhances the interaction with NRIP1 but inhibits interaction with KAT2B. In proliferating cells, stimulation by all-trans retinoic acid, activation of MAPK1-mediated phosphorylation and recruitment to PML bodies with subsequent sumoylation, suppresses OCT4 expression. In terms of processing, phosphorylated on several serine and threonine residues. Phosphorylation on Thr-210, stimulated by all-trans retinoic acid (atRA) mediates PML location and sumoylation in proliferating cells which then modulates its association with effector molecules, KAT2B and NRIP1. Phosphorylation on Ser-568 by PKC is important for protein stability and function as activator of RARB.

It is found in the nucleus. Its subcellular location is the PML body. Orphan nuclear receptor. Binds the IR7 element in the promoter of its own gene in an autoregulatory negative feedback mechanism. Primarily repressor of a broad range of genes including ESR1 and RARB. Together with NR2C2, forms the core of the DRED (direct repeat erythroid-definitive) complex that represses embryonic and fetal globin transcription. Binds to hormone response elements (HREs) consisting of two 5'-AGGTCA-3' half site direct repeat consensus sequences. Also activator of OCT4 gene expression. Plays a fundamental role in early embryogenesis and regulates embryonic stem cell proliferation and differentiation. Mediator of retinoic acid-regulated preadipocyte proliferation. The chain is Nuclear receptor subfamily 2 group C member 1 (Nr2c1) from Rattus norvegicus (Rat).